A 493-amino-acid polypeptide reads, in one-letter code: Cytochrome P450 2W1 (493 aa).

Positions 1 to 23 (MALLLLGVWGILLLLGLWGLLQG) are cleaved as a signal peptide. N-linked (GlcNAc...) asparagine glycosylation is present at N180. C436 provides a ligand contact to heme.

This sequence belongs to the cytochrome P450 family. Requires heme as cofactor. In terms of tissue distribution, detected in colon, ileum, and testes.

It is found in the endoplasmic reticulum lumen. It localises to the cell membrane. Its subcellular location is the microsome membrane. The enzyme catalyses all-trans-retinoate + reduced [NADPH--hemoprotein reductase] + O2 = all-trans-4-hydroxyretinoate + oxidized [NADPH--hemoprotein reductase] + H2O + H(+). The catalysed reaction is 1-(9Z-octadecenoyl)-sn-glycero-3-phosphocholine + reduced [NADPH--hemoprotein reductase] + O2 = 1-[8-hydroxy-(9Z)-octadecenoyl]-sn-glycero-3-phosphocholine + oxidized [NADPH--hemoprotein reductase] + H2O + H(+). It catalyses the reaction 1-(9Z-octadecenoyl)-sn-glycero-3-phosphocholine + reduced [NADPH--hemoprotein reductase] + O2 = 1-[11-hydroxy-(9Z)-octadecenoyl]-sn-glycero-3-phosphocholine + oxidized [NADPH--hemoprotein reductase] + H2O + H(+). It carries out the reaction 1-(9Z-octadecenoyl)-sn-glycero-3-phosphocholine + reduced [NADPH--hemoprotein reductase] + O2 = 1-[(9S,10R)-epoxy-octadecanoyl]-sn-glycero-3-phosphocholine + oxidized [NADPH--hemoprotein reductase] + H2O + H(+). The enzyme catalyses 1-(9Z-octadecenoyl)-sn-glycero-3-phosphocholine + reduced [NADPH--hemoprotein reductase] + O2 = 1-[(9R,10S)-epoxy-octadecanoyl]-sn-glycero-3-phosphocholine + oxidized [NADPH--hemoprotein reductase] + H2O + H(+). In terms of biological role, a cytochrome P450 monooxygenase that may play a role in retinoid and phospholipid metabolism. Catalyzes the hydroxylation of saturated carbon hydrogen bonds. Hydroxylates all trans-retinoic acid (atRA) to 4-hydroxyretinoate and may regulate atRA clearance. Other retinoids such as all-trans retinol and all-trans retinal are potential endogenous substrates. Catalyzes both epoxidation of double bonds and hydroxylation of carbon hydrogen bonds of the fatty acyl chain of 1-acylphospholipids/2-lysophospholipids. Can metabolize various lysophospholipids classes including lysophosphatidylcholines (LPCs), lysophosphatidylinositols (LPIs), lysophosphatidylserines (LPSs), lysophosphatidylglycerols (LPGs), lysophosphatidylethanolamines (LPEs) and lysophosphatidic acids (LPAs). Has low or no activity toward 2-acylphospholipids/1-lysophospholipids, diacylphospholipids and free fatty acids. May play a role in tumorigenesis by activating procarcinogens such as aflatoxin B1, polycyclic aromatic hydrocarbon dihydrodiols and aromatic amines. Mechanistically, uses molecular oxygen inserting one oxygen atom into a substrate, and reducing the second into a water molecule, with two electrons provided by NADPH via cytochrome P450 reductase (CPR; NADPH-ferrihemoprotein reductase). This chain is Cytochrome P450 2W1 (Cyp2w1), found in Mus musculus (Mouse).